The chain runs to 500 residues: Potassium/proton antiporter CemA (500 aa).

A helical membrane pass occupies residues 129-149; that stretch reads LFLTTIKTIFILFFVPFLVNF. An insert region spans residues 204–354; it reads HQTHRDSKPL…GSLDSIKNKD (151 aa). The next 3 membrane-spanning stretches (helical) occupy residues 378–398, 425–445, and 461–481; these read ITNF…LITL, ILLI…ELFF, and IFLL…YLIF.

The protein belongs to the CemA family.

The protein resides in the plastid. Its subcellular location is the chloroplast inner membrane. The enzyme catalyses K(+)(in) + H(+)(out) = K(+)(out) + H(+)(in). Contributes to K(+)/H(+) antiport activity by supporting proton efflux to control proton extrusion and homeostasis in chloroplasts in a light-dependent manner to modulate photosynthesis. Prevents excessive induction of non-photochemical quenching (NPQ) under continuous-light conditions. Indirectly promotes efficient inorganic carbon uptake into chloroplasts. The polypeptide is Potassium/proton antiporter CemA (Chlamydomonas reinhardtii (Chlamydomonas smithii)).